The following is a 217-amino-acid chain: MAEISAKLVKELRDQTGAGMMDCKKALNETSGDLTKATEWLRQKGIASAEKKAGRTAAEGAVGSYIHTGARVGVLVEVNCETDFVARGDAFQELVRNVAMQIAACPNVEFVTTDDIPADVKERETNIEMGRDDLGNKPEAMKAKIVEGRVNKRLKELALLEQPFIKDSSLSVAEMVKQLAGKIGENIQVRRFTRYTLGEGIEVKQEDFAAEVAAMTA.

The segment at 82–85 (TDFV) is involved in Mg(2+) ion dislocation from EF-Tu.

This sequence belongs to the EF-Ts family.

The protein resides in the cytoplasm. Its function is as follows. Associates with the EF-Tu.GDP complex and induces the exchange of GDP to GTP. It remains bound to the aminoacyl-tRNA.EF-Tu.GTP complex up to the GTP hydrolysis stage on the ribosome. The sequence is that of Elongation factor Ts from Synechococcus sp. (strain RCC307).